The primary structure comprises 273 residues: Dermonecrotic toxin LhSicTox-alphaIA2ai (273 aa).

Residue His5 is part of the active site. 2 residues coordinate Mg(2+): Glu25 and Asp27. His41 serves as the catalytic Nucleophile. 2 cysteine pairs are disulfide-bonded: Cys45/Cys51 and Cys47/Cys190. Asp85 is a Mg(2+) binding site.

Belongs to the arthropod phospholipase D family. Class II subfamily. Mg(2+) is required as a cofactor. In terms of tissue distribution, expressed by the venom gland.

Its subcellular location is the secreted. It catalyses the reaction an N-(acyl)-sphingosylphosphocholine = an N-(acyl)-sphingosyl-1,3-cyclic phosphate + choline. It carries out the reaction an N-(acyl)-sphingosylphosphoethanolamine = an N-(acyl)-sphingosyl-1,3-cyclic phosphate + ethanolamine. The enzyme catalyses a 1-acyl-sn-glycero-3-phosphocholine = a 1-acyl-sn-glycero-2,3-cyclic phosphate + choline. The catalysed reaction is a 1-acyl-sn-glycero-3-phosphoethanolamine = a 1-acyl-sn-glycero-2,3-cyclic phosphate + ethanolamine. Dermonecrotic toxins cleave the phosphodiester linkage between the phosphate and headgroup of certain phospholipids (sphingolipid and lysolipid substrates), forming an alcohol (often choline) and a cyclic phosphate. This toxin acts on sphingomyelin (SM). It may also act on ceramide phosphoethanolamine (CPE), lysophosphatidylcholine (LPC) and lysophosphatidylethanolamine (LPE), but not on lysophosphatidylserine (LPS), and lysophosphatidylglycerol (LPG). It acts by transphosphatidylation, releasing exclusively cyclic phosphate products as second products. Induces dermonecrosis, hemolysis, increased vascular permeability, edema, inflammatory response, and platelet aggregation. The polypeptide is Dermonecrotic toxin LhSicTox-alphaIA2ai (Loxosceles hirsuta (Recluse spider)).